A 200-amino-acid polypeptide reads, in one-letter code: Small ribosomal subunit protein mS38 (200 aa).

The protein belongs to the mitochondrion-specific ribosomal protein mS38 family. As to quaternary structure, component of the mitochondrial ribosome small subunit (28S) which comprises a 12S rRNA and about 30 distinct proteins. Interacts with Aurora-A. Ubiquitously expressed and especially highly expressed in heart, skeletal muscle and testis.

The protein resides in the mitochondrion matrix. The protein localises to the nucleus. Functionally, may act as a negative regulator of Aurora-A kinase, by down-regulation through proteasome-dependent degradation. The chain is Small ribosomal subunit protein mS38 (Aurkaip1) from Mus musculus (Mouse).